The primary structure comprises 252 residues: Imidazole glycerol phosphate synthase subunit HisF (252 aa).

Catalysis depends on residues Asp-11 and Asp-130.

It belongs to the HisA/HisF family. In terms of assembly, heterodimer of HisH and HisF.

The protein localises to the cytoplasm. The catalysed reaction is 5-[(5-phospho-1-deoxy-D-ribulos-1-ylimino)methylamino]-1-(5-phospho-beta-D-ribosyl)imidazole-4-carboxamide + L-glutamine = D-erythro-1-(imidazol-4-yl)glycerol 3-phosphate + 5-amino-1-(5-phospho-beta-D-ribosyl)imidazole-4-carboxamide + L-glutamate + H(+). The protein operates within amino-acid biosynthesis; L-histidine biosynthesis; L-histidine from 5-phospho-alpha-D-ribose 1-diphosphate: step 5/9. Functionally, IGPS catalyzes the conversion of PRFAR and glutamine to IGP, AICAR and glutamate. The HisF subunit catalyzes the cyclization activity that produces IGP and AICAR from PRFAR using the ammonia provided by the HisH subunit. This chain is Imidazole glycerol phosphate synthase subunit HisF, found in Desulforamulus reducens (strain ATCC BAA-1160 / DSM 100696 / MI-1) (Desulfotomaculum reducens).